The following is a 551-amino-acid chain: Endolytic murein transglycosylase (551 aa).

Topologically, residues 1–187 (MSEKSREEEK…PKKEKKSHVK (187 aa)) are cytoplasmic. The tract at residues 38-180 (VRTPANEPSA…EGAKPAKPKK (143 aa)) is disordered. 2 stretches are compositionally biased toward low complexity: residues 100-110 (PSSPAEESGSR) and 145-157 (QAGPETPTPATET). Basic and acidic residues predominate over residues 159 to 174 (DIIRDTSRRSRREGAK). Residues 188–208 (AFVISFLVFLALLSAGGYFGY) traverse the membrane as a helical segment. The Extracellular portion of the chain corresponds to 209 to 551 (QYVLDSLLPI…VAEHVNSKLN (343 aa)).

It belongs to the transglycosylase MltG family. Interacts with RodZ. Interacts with MreC in the elongasome; interaction is strongly reduced when the 90 C-terminal residues of MreC are missing. Interacts with KhpB (also called EloR/Jag) via MltG's N-terminus, suggesting the N-terminus of MltG is cytoplasmic.

It localises to the cell membrane. The enzyme catalyses a peptidoglycan chain = a peptidoglycan chain with N-acetyl-1,6-anhydromuramyl-[peptide] at the reducing end + a peptidoglycan chain with N-acetylglucosamine at the non-reducing end.. Functions as a peptidoglycan terminase that cleaves nascent peptidoglycan strands endolytically to terminate their elongation. In terms of biological role, mutations in this gene suppress deletion of PBP2b (penA); truncation at residue 168, undefined changes between residue Ile-447 and Ala-505, and mutation of Ala-505 suppress the penA deletion. Probably part of the elongasome which synthesizes peripheral peptidoglycan. This Streptococcus pneumoniae (strain ATCC BAA-255 / R6) protein is Endolytic murein transglycosylase.